Here is an 88-residue protein sequence, read N- to C-terminus: Small ribosomal subunit protein bS16 (88 aa).

It belongs to the bacterial ribosomal protein bS16 family.

This is Small ribosomal subunit protein bS16 from Geotalea daltonii (strain DSM 22248 / JCM 15807 / FRC-32) (Geobacter daltonii).